A 711-amino-acid polypeptide reads, in one-letter code: Ribosomal RNA large subunit methyltransferase K/L (711 aa).

One can recognise a THUMP domain in the interval Asp-42 to Leu-153.

Belongs to the methyltransferase superfamily. RlmKL family.

Its subcellular location is the cytoplasm. The enzyme catalyses guanosine(2445) in 23S rRNA + S-adenosyl-L-methionine = N(2)-methylguanosine(2445) in 23S rRNA + S-adenosyl-L-homocysteine + H(+). It catalyses the reaction guanosine(2069) in 23S rRNA + S-adenosyl-L-methionine = N(2)-methylguanosine(2069) in 23S rRNA + S-adenosyl-L-homocysteine + H(+). Specifically methylates the guanine in position 2445 (m2G2445) and the guanine in position 2069 (m7G2069) of 23S rRNA. The protein is Ribosomal RNA large subunit methyltransferase K/L of Xanthomonas oryzae pv. oryzae (strain KACC10331 / KXO85).